A 350-amino-acid polypeptide reads, in one-letter code: Neuronal-specific septin-3 (350 aa).

Residues 1–10 (MSKGLPEART) are compositionally biased toward basic and acidic residues. A disordered region spans residues 1–29 (MSKGLPEARTDAAMSELVPEPRPKPAVPM). The Septin-type G domain occupies 58–331 (TGFDFNIMVV…ETYRAKRLND (274 aa)). A G1 motif region spans residues 68 to 75 (GQSGLGKS). GTP is bound at residue 68 to 75 (GQSGLGKS). A Phosphoserine modification is found at S91. Residue T102 participates in GTP binding. Positions 125–128 (DTPG) are G3 motif. The tract at residues 207–210 (AKAD) is G4 motif. Residues 208–216 (KADTMTLEE), G265, and R280 each bind GTP. The segment at 328–350 (RLNDNGGLPPVSVDTEESHDSNP) is disordered.

Belongs to the TRAFAC class TrmE-Era-EngA-EngB-Septin-like GTPase superfamily. Septin GTPase family. Septins polymerize into heterooligomeric protein complexes that form filaments, and can associate with cellular membranes, actin filaments and microtubules. GTPase activity is required for filament formation. Phosphorylated by PKG on serine residues. Phosphorylated by PKG on Ser-91. As to expression, expressed in the brain including the cerebrum, hippocampus and cerebellum (at protein level).

Its subcellular location is the cytoplasm. It localises to the cytoskeleton. It is found in the synapse. Functionally, filament-forming cytoskeletal GTPase. May play a role in cytokinesis (Potential). The sequence is that of Neuronal-specific septin-3 from Mus musculus (Mouse).